We begin with the raw amino-acid sequence, 864 residues long: MFPNVTGLLNKGHKIRGTVVLMRKNVLDFNTIVSIGGGNVHGVIDSGINIIGSTLDGLTAFLGRSVSLQLISATKSDANGKGKVGKDTFLEGVLASLPTLGAGESAFNIHFEWDHEMGIPGAFYIKNYMQVEFFLKSLTLEDVPNHGTIRFVCNSWVYNSKLYKSPRIFFANKSYLPSETPSPLVKYREEELQTLRGDGTGERKLHERIYDYDVYNDLGNPDHGEHLARPILGGSSTHPYPRRGRTGRYPTRKDPNSEKPATETYVPRDENFGHLKSSDFLAYGIKSVSQCVVPAFESAFDLNFTPNEFDSFQDVRNLFEGGIKLPLDVISTLSPLPVVKEIFRTDGEQVLKFTPPHVIRVSKSAWMTDEEFAREMLAGVNPCMIRGLQEFPPKSNLDPAEYGDHTSKISVDVLNLDGCTIDEALASGRLFILDYHDTFIPFLRRINETSAKAYATRTILFLKENGTLKPVAIELSLPHPDGDKSGFVSKVILPADEGVESTIWLLAKAYVVVNDSCYHQLMSHWLNTHAVIEPFVIATNRQLSVVHPINKLLAPHYRDTMMNINALARDSLINANGLIERSFLPSKYAVEMSSAVYKYWVFTDQALPNDLIKRNMAVKDSSSPYGLRLLIEDYPYAVDGLEIWTAIKTWVQDYVSLYYATDNDIKNDSELQHWWKEVVEKGHGDLKDKPWWPKLQTFDELVEVCTIIIWTASALHAAVNFGQYPYGGLILNRPTLSRRLLPEEGTAEYDEMVKSSQKAYLRTITPKFQTLIDLSVIEILSRHASDEVYLGQRENPHWTSDSKALQAFQKFGNKLAEIEAKLTNKNNDPSLYHRVGPVQLPYTLLHPSSKEGLTFRGIPNSISI.

The 126-residue stretch at 46 to 171 (SGINIIGSTL…LYKSPRIFFA (126 aa)) folds into the PLAT domain. The 691-residue stretch at 174–864 (SYLPSETPSP…FRGIPNSISI (691 aa)) folds into the Lipoxygenase domain. Residues 230-264 (PILGGSSTHPYPRRGRTGRYPTRKDPNSEKPATET) are disordered. Basic and acidic residues predominate over residues 251–264 (TRKDPNSEKPATET). Fe cation is bound by residues H524, H529, H716, N720, and I864.

It belongs to the lipoxygenase family. Fe cation is required as a cofactor.

Its subcellular location is the cytoplasm. The catalysed reaction is (9Z,12Z)-octadecadienoate + O2 = (9S)-hydroperoxy-(10E,12Z)-octadecadienoate. The protein operates within lipid metabolism; oxylipin biosynthesis. Plant lipoxygenase may be involved in a number of diverse aspects of plant physiology including growth and development, pest resistance, and senescence or responses to wounding. It catalyzes the hydroperoxidation of lipids containing a cis,cis-1,4-pentadiene structure. The sequence is that of Seed linoleate 9S-lipoxygenase-2 (LOX1.2) from Pisum sativum (Garden pea).